Here is a 396-residue protein sequence, read N- to C-terminus: S-arrestin (396 aa).

It belongs to the arrestin family.

Its function is as follows. Arrestin is one of the major proteins of the ros (retinal rod outer segments); it binds to photoactivated-phosphorylated rhodopsin, thereby apparently preventing the transducin-mediated activation of phosphodiesterase. The chain is S-arrestin from Lithobates pipiens (Northern leopard frog).